Consider the following 119-residue polypeptide: DNA-binding protein inhibitor ID-3 (119 aa).

The bHLH domain occupies 28 to 80 (RGKGPAAEEPLSLLDDMNHCYSRLRELVPGVPRGTQLSQVEILQRVIDYILDL).

Homodimer, and heterodimer with other HLH proteins. Interacts with COPS5 and COPS7A. Interacts with IFI204. Interacts with GATA4 and NKX2-5. Interacts with ANKRD2; both proteins cooperate in myoblast differentiation. Interacts with CLOCK and BMAL1.

Its subcellular location is the nucleus. In terms of biological role, transcriptional regulator (lacking a basic DNA binding domain) which negatively regulates the basic helix-loop-helix (bHLH) transcription factors by forming heterodimers and inhibiting their DNA binding and transcriptional activity. Implicated in regulating a variety of cellular processes, including cellular growth, senescence, differentiation, apoptosis, angiogenesis, and neoplastic transformation. Involved in myogenesis by inhibiting skeletal muscle and cardiac myocyte differentiation and promoting muscle precursor cells proliferation. Inhibits the binding of E2A-containing protein complexes to muscle creatine kinase E-box enhancer. Regulates the circadian clock by repressing the transcriptional activator activity of the CLOCK-BMAL1 heterodimer. This chain is DNA-binding protein inhibitor ID-3 (ID3), found in Canis lupus familiaris (Dog).